The sequence spans 139 residues: von Hippel-Lindau-like protein (139 aa).

A disordered region spans residues 1–22 (MPWRAGNGVGLEAQAGTQEAGP). The segment at 54-135 (SRIIICNHSP…GQPVFANITL (82 aa)) is beta-domain.

Belongs to the VHL family. As to quaternary structure, interacts via the beta domain with the ODD domain of HIF1A. This interaction is independent of prolyl hydroxylation of HIF1A. As to expression, abundantly expressed in the placenta.

In terms of biological role, functions as a dominant-negative VHL to serve as a protector of HIFalpha. The protein is von Hippel-Lindau-like protein (VHLL) of Homo sapiens (Human).